The primary structure comprises 333 residues: Glycerol-3-phosphate dehydrogenase [NAD(P)+] (333 aa).

Positions 10, 11, 31, and 105 each coordinate NADPH. Residues Lys-105, Gly-136, and Ser-138 each contribute to the sn-glycerol 3-phosphate site. Position 140 (Ala-140) interacts with NADPH. Sn-glycerol 3-phosphate is bound by residues Lys-191, Asp-244, Ser-254, Arg-255, and Asn-256. Catalysis depends on Lys-191, which acts as the Proton acceptor. Residue Arg-255 coordinates NADPH. Residues Val-279 and Glu-281 each coordinate NADPH.

The protein belongs to the NAD-dependent glycerol-3-phosphate dehydrogenase family.

The protein resides in the cytoplasm. It carries out the reaction sn-glycerol 3-phosphate + NAD(+) = dihydroxyacetone phosphate + NADH + H(+). The enzyme catalyses sn-glycerol 3-phosphate + NADP(+) = dihydroxyacetone phosphate + NADPH + H(+). It participates in membrane lipid metabolism; glycerophospholipid metabolism. Its function is as follows. Catalyzes the reduction of the glycolytic intermediate dihydroxyacetone phosphate (DHAP) to sn-glycerol 3-phosphate (G3P), the key precursor for phospholipid synthesis. The protein is Glycerol-3-phosphate dehydrogenase [NAD(P)+] of Leptospira biflexa serovar Patoc (strain Patoc 1 / Ames).